The chain runs to 428 residues: Serine--tRNA ligase (428 aa).

231–233 (TSE) is a binding site for L-serine. ATP-binding positions include 262-264 (RRE) and V278. E285 lines the L-serine pocket. 349-352 (ELTS) is an ATP binding site. Position 384 (T384) interacts with L-serine.

It belongs to the class-II aminoacyl-tRNA synthetase family. Type-1 seryl-tRNA synthetase subfamily. As to quaternary structure, homodimer. The tRNA molecule binds across the dimer.

It is found in the cytoplasm. The enzyme catalyses tRNA(Ser) + L-serine + ATP = L-seryl-tRNA(Ser) + AMP + diphosphate + H(+). It catalyses the reaction tRNA(Sec) + L-serine + ATP = L-seryl-tRNA(Sec) + AMP + diphosphate + H(+). The protein operates within aminoacyl-tRNA biosynthesis; selenocysteinyl-tRNA(Sec) biosynthesis; L-seryl-tRNA(Sec) from L-serine and tRNA(Sec): step 1/1. Catalyzes the attachment of serine to tRNA(Ser). Is also able to aminoacylate tRNA(Sec) with serine, to form the misacylated tRNA L-seryl-tRNA(Sec), which will be further converted into selenocysteinyl-tRNA(Sec). The protein is Serine--tRNA ligase of Bifidobacterium longum subsp. infantis (strain ATCC 15697 / DSM 20088 / JCM 1222 / NCTC 11817 / S12).